The chain runs to 774 residues: Fe(3+) dicitrate transport protein FecA (774 aa).

The signal sequence occupies residues 1–33 (MTPLRVFRKTTPLVNTIRLSLLPLAGLSFSAFA). The TonB box motif lies at 56–63 (FTLSVDAS). Residues 129–250 (DVFEHAGARD…VGGVVNFVTR (122 aa)) enclose the TBDR plug domain. Residues 255–774 (DFGIEAGVEG…TLYMQGSLKF (520 aa)) form the TBDR beta-barrel domain. The TonB C-terminal box motif lies at 757-774 (GIYAGQPRTLYMQGSLKF).

Belongs to the TonB-dependent receptor family. As to quaternary structure, interacts (via periplasmic N-terminus) with FecR (via periplasmic C-terminus).

It localises to the cell outer membrane. Functionally, fecA is the outer membrane receptor protein in the Fe(3+) dicitrate transport system. This Escherichia coli (strain K12) protein is Fe(3+) dicitrate transport protein FecA (fecA).